We begin with the raw amino-acid sequence, 254 residues long: 3-deoxy-manno-octulosonate cytidylyltransferase (254 aa).

This sequence belongs to the KdsB family.

It localises to the cytoplasm. It catalyses the reaction 3-deoxy-alpha-D-manno-oct-2-ulosonate + CTP = CMP-3-deoxy-beta-D-manno-octulosonate + diphosphate. Its pathway is nucleotide-sugar biosynthesis; CMP-3-deoxy-D-manno-octulosonate biosynthesis; CMP-3-deoxy-D-manno-octulosonate from 3-deoxy-D-manno-octulosonate and CTP: step 1/1. It functions in the pathway bacterial outer membrane biogenesis; lipopolysaccharide biosynthesis. Functionally, activates KDO (a required 8-carbon sugar) for incorporation into bacterial lipopolysaccharide in Gram-negative bacteria. This chain is 3-deoxy-manno-octulosonate cytidylyltransferase, found in Haemophilus influenzae (strain PittEE).